Reading from the N-terminus, the 135-residue chain is Interleukin-4 (135 aa).

The N-terminal stretch at 1 to 24 (MGLTSQLIPALVCLLVCTSHFVHG) is a signal peptide. Disulfide bonds link C48-C85 and C70-C105. N62 and N96 each carry an N-linked (GlcNAc...) asparagine glycan.

It belongs to the IL-4/IL-13 family.

The protein localises to the secreted. Participates in at least several B-cell activation processes as well as of other cell types. It is a costimulator of DNA-synthesis. It induces the expression of class II MHC molecules on resting B-cells. It enhances both secretion and cell surface expression of IgE and IgG1. It also regulates the expression of the low affinity Fc receptor for IgE (CD23) on both lymphocytes and monocytes. Positively regulates IL31RA expression in macrophages. Stimulates autophagy in dendritic cells by interfering with mTORC1 signaling and through the induction of RUFY4. The chain is Interleukin-4 (IL4) from Ovis aries (Sheep).